Here is a 620-residue protein sequence, read N- to C-terminus: Glutathione-regulated potassium-efflux system protein KefC (620 aa).

Helical transmembrane passes span 4-24 (HTLI…PIAV), 26-46 (LGLG…PWGL), 54-74 (SILH…GLEL), 90-110 (GALQ…LLGL), 114-134 (VAEL…MQAM), 149-169 (FAVL…IPLL), 178-198 (MGAF…VVLL), 218-238 (VFSA…EEVG), 270-290 (GLLL…GTLL), 294-314 (LRIV…LWLI), 327-347 (WFAV…GAAQ), and 359-379 (SLTL…VILN). Positions 399–518 (QPRVIIAGFG…AGVEKPERET (120 aa)) constitute an RCK N-terminal domain. The tract at residues 597 to 620 (GWQGTEEGKHTGNMADEPETKPSS) is disordered.

It belongs to the monovalent cation:proton antiporter 2 (CPA2) transporter (TC 2.A.37) family. KefC subfamily. Homodimer. Interacts with the regulatory subunit KefF.

It localises to the cell inner membrane. Functionally, pore-forming subunit of a potassium efflux system that confers protection against electrophiles. Catalyzes K(+)/H(+) antiport. The sequence is that of Glutathione-regulated potassium-efflux system protein KefC from Escherichia coli (strain K12 / MC4100 / BW2952).